The following is an 84-amino-acid chain: Putative membrane protein insertion efficiency factor (84 aa).

A disordered region spans residues 63–84; the sequence is WGGSGYDPVPGADPEHDRRPRG. Over residues 75-84 the composition is skewed to basic and acidic residues; it reads DPEHDRRPRG.

The protein belongs to the UPF0161 family.

The protein localises to the cell inner membrane. Could be involved in insertion of integral membrane proteins into the membrane. This chain is Putative membrane protein insertion efficiency factor, found in Cereibacter sphaeroides (strain ATCC 17025 / ATH 2.4.3) (Rhodobacter sphaeroides).